Consider the following 422-residue polypeptide: uncharacterized protein (422 aa).

It belongs to the N(4)/N(6)-methyltransferase family.

The catalysed reaction is a 2'-deoxyadenosine in DNA + S-adenosyl-L-methionine = an N(6)-methyl-2'-deoxyadenosine in DNA + S-adenosyl-L-homocysteine + H(+). This is an uncharacterized protein from Mycoplasma pneumoniae (strain ATCC 29342 / M129 / Subtype 1) (Mycoplasmoides pneumoniae).